The chain runs to 311 residues: Triacylglycerol lipase (311 aa).

The first 26 residues, methionine 1–alanine 26, serve as a signal peptide directing secretion. One can recognise an AB hydrolase-1 domain in the interval proline 35–glutamate 280. Methionine 42 contacts substrate. Catalysis depends on serine 108, which acts as the Nucleophile. Histidine 109 provides a ligand contact to substrate. Cysteine 209 and cysteine 261 form a disulfide bridge. Position 235 (aspartate 235) interacts with Ca(2+). Active-site charge relay system residues include aspartate 255 and histidine 277. Ca(2+) is bound by residues aspartate 279, glutamine 283, and leucine 287.

It belongs to the AB hydrolase superfamily. Pseudomonas lipase family. As to quaternary structure, monomer. The cofactor is Ca(2+).

The protein resides in the secreted. The catalysed reaction is a triacylglycerol + H2O = a diacylglycerol + a fatty acid + H(+). Its function is as follows. Catalyzes the hydrolysis of triacylglycerol. Also able to catalyze, in anhydrous organic solvents, intramolecular transesterification of omega-hydroxyfatty acid esters to form macrocyclic lactones. This biosynthesis is dependent on the chain length of the substrates, and the formation of monomer lactone is maximum with methyl 18-hydroxyoctadecanoate. With shorter substrates, monomer lactone decreases and the formation of diolide (dimer lactone) increases. The polypeptide is Triacylglycerol lipase (Pseudomonas sp. (strain 109)).